Reading from the N-terminus, the 388-residue chain is Alanine racemase (388 aa).

Catalysis depends on lysine 40, which acts as the Proton acceptor; specific for D-alanine. Lysine 40 is modified (N6-(pyridoxal phosphate)lysine). Arginine 137 contacts substrate. Tyrosine 269 (proton acceptor; specific for L-alanine) is an active-site residue. Methionine 318 provides a ligand contact to substrate.

Belongs to the alanine racemase family. The cofactor is pyridoxal 5'-phosphate.

It carries out the reaction L-alanine = D-alanine. It participates in amino-acid biosynthesis; D-alanine biosynthesis; D-alanine from L-alanine: step 1/1. Functionally, catalyzes the interconversion of L-alanine and D-alanine. May also act on other amino acids. This is Alanine racemase (alr) from Halalkalibacterium halodurans (strain ATCC BAA-125 / DSM 18197 / FERM 7344 / JCM 9153 / C-125) (Bacillus halodurans).